Consider the following 777-residue polypeptide: Dynamin-like protein ARC5 (777 aa).

Residues 45-343 enclose the Dynamin-type G domain; that stretch reads PFEAPAVLVV…LWKRYKESVP (299 aa). A G1 motif region spans residues 55-62; that stretch reads GQQTDGKS. A GTP-binding site is contributed by 55-62; it reads GQQTDGKS. Residues 81 to 83 form a G2 motif region; sequence KTR. The tract at residues 160–163 is G3 motif; it reads DTPG. Residues 160–164 and 231–234 each bind GTP; these read DTPGL and TKLD. Residues 231–234 form a G4 motif region; the sequence is TKLD. Positions 265–268 are G5 motif; the sequence is SPFF. Coiled coils occupy residues 300 to 320 and 728 to 765; these read EDIA…EKSR and NLRQ…NSHE.

Belongs to the TRAFAC class dynamin-like GTPase superfamily. Dynamin/Fzo/YdjA family. As to quaternary structure, forms a homodimer and heterodimers with DRP3A and DRP3B on peroxisomes. Also interacts with FIS1A (but not FIS1B) and PEX11 proteins (PEX11A, PEX11B, PEX11C, PEX11D and PEX11E) on peroxisomes. Interacts with PDV1 and PDV2. Post-translationally, stabilized at the plastid outer envelope membranes (OEMs) in the constriction site when in complex with GTP, but destabilized after conversion of GTP into GDP leading to turnover with a cytosolic pool.

Its subcellular location is the cytoplasm. The protein resides in the plastid. It localises to the chloroplast outer membrane. It is found in the peroxisome. The protein localises to the cytosol. It carries out the reaction GTP + H2O = GDP + phosphate + H(+). Its activity is regulated as follows. GTPase activity is repressed by PDV2 thus increasing stability at the plastid outer envelope membranes (OEMs) periphery. Its function is as follows. Mechanochemical GTPase component of both plastid and peroxisome division machinery. Required for the last steps of plastid division specifically in mesophyll-cell, when the narrow isthmus breaks, facilitating the separation of the daughter plastids. Necessary for peroxisome activities. Seems to influence stromule (stroma-filled tubular extensions of the plastid envelope membrane) length and frequency. The protein is Dynamin-like protein ARC5 of Arabidopsis thaliana (Mouse-ear cress).